Reading from the N-terminus, the 400-residue chain is Ribose-phosphate pyrophosphokinase 2, chloroplastic (400 aa).

The transit peptide at 1–44 directs the protein to the chloroplast; the sequence is MASLALTSPPSVKIPSYLSSSSSSLFSRSSISFRTTESRSRICV. Residues Asp-214, His-216, Asp-225, and Asp-229 each contribute to the Mg(2+) site. Residues 300-315 are binding of phosphoribosylpyrophosphate; sequence GKVAVMVDDIIDTAGT.

It belongs to the ribose-phosphate pyrophosphokinase family.

Its subcellular location is the plastid. It localises to the chloroplast. It catalyses the reaction D-ribose 5-phosphate + ATP = 5-phospho-alpha-D-ribose 1-diphosphate + AMP + H(+). This is Ribose-phosphate pyrophosphokinase 2, chloroplastic (PRS2) from Arabidopsis thaliana (Mouse-ear cress).